A 130-amino-acid polypeptide reads, in one-letter code: Small ribosomal subunit protein uS11c (130 aa).

Belongs to the universal ribosomal protein uS11 family. As to quaternary structure, part of the 30S ribosomal subunit.

The protein resides in the plastid. The protein localises to the chloroplast. This chain is Small ribosomal subunit protein uS11c, found in Zygnema circumcarinatum (Green alga).